The chain runs to 413 residues: Enhanced ethylene response protein 5 (413 aa).

Residues 216–402 (VTYMYYTGRL…KVVVLSKQDP (187 aa)) form the PCI domain.

In terms of assembly, interacts with EIN2 (via C-terminus). May also interact weakly with CSN8. Interacts with DSS1(V), AMPD, SAC3A, SAC3B and At5g61290 (AC Q9FLK4). Interacts with UCH1 and UCH2. Interacts with NUP1, anchoring the TREX-2 complex on the nuclear pore complex. In terms of tissue distribution, expressed at low levels in roots, leaves, stems and shoots. Detected in seedlings, roots, leaves and anthers.

It localises to the nucleus. Its function is as follows. Involved in the regulation of ethylene response. Probable TREX-2 component required for nuclear RNA export. The TREX-2 complex (transcription and export complex 2) functions in docking export-competent ribonucleoprotein particles (mRNPs) to the nuclear entrance of the nuclear pore complex (nuclear basket). TREX-2 participates in mRNA export and accurate chromatin positioning in the nucleus by tethering genes to the nuclear periphery. The sequence is that of Enhanced ethylene response protein 5 from Arabidopsis thaliana (Mouse-ear cress).